A 96-amino-acid polypeptide reads, in one-letter code: ATP synthase subunit c (96 aa).

The next 2 membrane-spanning stretches (helical) occupy residues 24–44 and 75–95; these read HVGA…VGVG and AIAE…IFVA.

This sequence belongs to the ATPase C chain family. As to quaternary structure, F-type ATPases have 2 components, F(1) - the catalytic core - and F(0) - the membrane proton channel. F(1) has five subunits: alpha(3), beta(3), gamma(1), delta(1), epsilon(1). F(0) has three main subunits: a(1), b(2) and c(10-14). The alpha and beta chains form an alternating ring which encloses part of the gamma chain. F(1) is attached to F(0) by a central stalk formed by the gamma and epsilon chains, while a peripheral stalk is formed by the delta and b chains.

It localises to the cell membrane. F(1)F(0) ATP synthase produces ATP from ADP in the presence of a proton or sodium gradient. F-type ATPases consist of two structural domains, F(1) containing the extramembraneous catalytic core and F(0) containing the membrane proton channel, linked together by a central stalk and a peripheral stalk. During catalysis, ATP synthesis in the catalytic domain of F(1) is coupled via a rotary mechanism of the central stalk subunits to proton translocation. Its function is as follows. Key component of the F(0) channel; it plays a direct role in translocation across the membrane. A homomeric c-ring of between 10-14 subunits forms the central stalk rotor element with the F(1) delta and epsilon subunits. This is ATP synthase subunit c from Mycoplasmoides gallisepticum (strain R(low / passage 15 / clone 2)) (Mycoplasma gallisepticum).